The following is a 359-amino-acid chain: Guanine nucleotide-binding protein G(q) subunit alpha (359 aa).

S-palmitoyl cysteine attachment occurs at residues cysteine 9 and cysteine 10. The 322-residue stretch at 38 to 359 (RELKLLLLGT…QLNLKEYNLV (322 aa)) folds into the G-alpha domain. The tract at residues 41-54 (KLLLLGTGESGKST) is G1 motif. Serine 50, glycine 51, lysine 52, serine 53, threonine 54, serine 156, leucine 180, arginine 181, and arginine 183 together coordinate GTP. Position 53 (serine 53) interacts with Mg(2+). Residues 178–186 (DVLRVRVPT) are G2 motif. Threonine 186 contacts Mg(2+). The G3 motif stretch occupies residues 201–210 (FRMVDVGGQR). At glutamine 209 the chain carries 5-glutamyl histamine. The segment at 270-277 (ILFLNKKD) is G4 motif. Positions 274, 275, 277, and 331 each coordinate GTP. A G5 motif region spans residues 329–334 (TCATDT).

The protein belongs to the G-alpha family. G(q) subfamily. G proteins are composed of 3 units; alpha, beta and gamma. The alpha chain contains the guanine nucleotide binding site. Interacts (GDP-bound form) with RIC8A (via C-terminus); promoting GNAQ folding and association with the plasma membrane. Binds NHERF1. Forms a complex with PECAM1 and BDKRB2. Interacts with GAS2L2. Palmitoylated by ZDHHC3 and ZDHHC7. Palmitoylation occurs in the Golgi and participates in the localization of GNAQ to the plasma membrane. In terms of processing, histaminylated at Gln-209 residues by TGM2.

It localises to the cell membrane. It is found in the golgi apparatus. The protein resides in the nucleus. Its subcellular location is the nucleus membrane. It carries out the reaction GTP + H2O = GDP + phosphate + H(+). Functionally, guanine nucleotide-binding proteins (G proteins) function as transducers downstream of G protein-coupled receptors (GPCRs) in numerous signaling cascades. The alpha chain contains the guanine nucleotide binding site and alternates between an active, GTP-bound state and an inactive, GDP-bound state. Signaling by an activated GPCR promotes GDP release and GTP binding. The alpha subunit has a low GTPase activity that converts bound GTP to GDP, thereby terminating the signal. Both GDP release and GTP hydrolysis are modulated by numerous regulatory proteins. Signaling is mediated via phospholipase C-beta-dependent inositol lipid hydrolysis for signal propagation: activates phospholipase C-beta: following GPCR activation, GNAQ activates PLC-beta (PLCB1, PLCB2, PLCB3 or PLCB4), leading to production of diacylglycerol (DAG) and inositol 1,4,5-trisphosphate (IP3). Required for platelet activation. Regulates B-cell selection and survival and is required to prevent B-cell-dependent autoimmunity. Regulates chemotaxis of BM-derived neutrophils and dendritic cells (in vitro). Transduces FFAR4 signaling in response to long-chain fatty acids (LCFAs). Together with GNA11, required for heart development. The chain is Guanine nucleotide-binding protein G(q) subunit alpha (GNAQ) from Canis lupus familiaris (Dog).